Consider the following 1091-residue polypeptide: Neural cell adhesion molecule 1 (1091 aa).

Positions 1–19 (MLPAAALPWTLFFLGAAAS) are cleaved as a signal peptide. 5 consecutive Ig-like C2-type domains span residues 20–113 (LQVD…VNVK), 116–205 (QKLM…KDIQ), 212–301 (PSVR…ATIH), 308–403 (PKIT…LEVQ), and 406–495 (PKLQ…FILV). The Extracellular portion of the chain corresponds to 20 to 711 (LQVDIVPSQG…STSPTSGLGT (692 aa)). Cystine bridges form between Cys-41–Cys-96 and Cys-139–Cys-189. Heparin contacts are provided by residues 152 to 156 (KHKGR) and 161 to 165 (KKDVR). N-linked (GlcNAc...) asparagine glycosylation is present at Asn-222. A disulfide bridge connects residues Cys-235 and Cys-287. N-linked (GlcNAc...) asparagine glycans are attached at residues Asn-315, Asn-347, Asn-423, Asn-449, and Asn-478. Cys-329 and Cys-385 form a disulfide bridge. Cysteines 426 and 479 form a disulfide. 2 Fibronectin type-III domains span residues 499 to 598 (TPSS…TQPV) and 600 to 696 (EPSA…SAQP). Residues 712–729 (AAIVGILIVIFVLLLVAV) form a helical membrane-spanning segment. At 730-1091 (DVTCYFLNKC…ATEIRHLQQK (362 aa)) the chain is on the cytoplasmic side. 4 disordered regions span residues 756–809 (GAKG…TEPE), 840–916 (ATAQ…NNLS), 937–1023 (ETSK…GTFK), and 1041–1091 (TPAS…LQQK). Basic and acidic residues predominate over residues 758–799 (KGKDMEEGKAAFSKDESKEPIVEVRTEEERTPNHDGGKHTEP). Low complexity predominate over residues 845 to 856 (SPTSETTTLTSS). Polar residues-rich tracts occupy residues 904-916 (DTPS…NNLS) and 980-1012 (QPST…PSQN). Basic and acidic residues-rich tracts occupy residues 1013–1023 (EDFKMDEGTFK) and 1068–1091 (KTEK…LQQK).

Post-translationally, polysialylated by ST8SIA2 and ST8SIA4. Polysialylation modulates cell interactions by confering both attractive and repulsive properties that are highly regulated by ST8SIA2 and ST8SIA4. Polysialylation is formed on a-2,3-linked sialic acid of core glycans.

It localises to the cell membrane. This protein is a cell adhesion molecule involved in neuron-neuron adhesion, neurite fasciculation, outgrowth of neurites, etc. This chain is Neural cell adhesion molecule 1, found in Gallus gallus (Chicken).